Here is a 280-residue protein sequence, read N- to C-terminus: uncharacterized protein (280 aa).

The HTH rpiR-type domain occupies 1-78 (MDVIQRIKEK…VLLAQSISRA (78 aa)). Residues 37–57 (ISDLSEKAGVKSEASVVKFYK) constitute a DNA-binding region (H-T-H motif). Positions 123-263 (TVDLFKNAQR…YTLLAARDPR (141 aa)) constitute an SIS domain.

This is an uncharacterized protein from Thermotoga maritima (strain ATCC 43589 / DSM 3109 / JCM 10099 / NBRC 100826 / MSB8).